A 400-amino-acid chain; its full sequence is MSSKLVLVLNCGSSSLKFAIIDAVNGDEYLSGLAECFHLPEARIKWKMDGSKQEAALGAGAAHSEALNFIVNTILAQKPELSAQLTAIGHRIVHGGEKYTSSVVIDESVIQGIKDSASFAPLHNPAHLIGIAEALKSFPQLKDKNVAVFDTAFHQTMPEESYLYALPYSLYKEHGVRRYGAHGTSHFYVTQEAAKMLNKPVEELNIITCHLGNGGSVSAIRNGKCVDTSMGLTPLEGLVMGTRSGDIDPAIIFHLHDTLGMSVDQINKMLTKESGLLGLTEVTSDCRYVEDNYATKEDAKRAMDVYCHRLAKYIGSYTALMDGRLDAVVFTGGIGENAAMVRELSLGKLGVLGFEVDHERNLAARFGKSGFINKEGTRPAVVIPTNEELVIAQDASRLTA.

Asn-10 contributes to the Mg(2+) binding site. Lys-17 is an ATP binding site. Substrate is bound at residue Arg-91. Asp-150 acts as the Proton donor/acceptor in catalysis. ATP contacts are provided by residues 210 to 214 (HLGNG), 285 to 287 (DCR), and 333 to 337 (GIGEN). Residue Glu-387 coordinates Mg(2+).

The protein belongs to the acetokinase family. Homodimer. Mg(2+) is required as a cofactor. The cofactor is Mn(2+).

The protein resides in the cytoplasm. It catalyses the reaction acetate + ATP = acetyl phosphate + ADP. It functions in the pathway metabolic intermediate biosynthesis; acetyl-CoA biosynthesis; acetyl-CoA from acetate: step 1/2. Functionally, catalyzes the formation of acetyl phosphate from acetate and ATP. Can also catalyze the reverse reaction. The protein is Acetate kinase of Salmonella typhi.